The primary structure comprises 344 residues: Phosphoribosylformylglycinamidine cyclo-ligase (344 aa).

It belongs to the AIR synthase family.

The protein localises to the cytoplasm. It catalyses the reaction 2-formamido-N(1)-(5-O-phospho-beta-D-ribosyl)acetamidine + ATP = 5-amino-1-(5-phospho-beta-D-ribosyl)imidazole + ADP + phosphate + H(+). The protein operates within purine metabolism; IMP biosynthesis via de novo pathway; 5-amino-1-(5-phospho-D-ribosyl)imidazole from N(2)-formyl-N(1)-(5-phospho-D-ribosyl)glycinamide: step 2/2. This Haemophilus influenzae (strain PittGG) protein is Phosphoribosylformylglycinamidine cyclo-ligase.